We begin with the raw amino-acid sequence, 415 residues long: Gamma-glutamyl phosphate reductase (415 aa).

Belongs to the gamma-glutamyl phosphate reductase family.

The protein resides in the cytoplasm. The catalysed reaction is L-glutamate 5-semialdehyde + phosphate + NADP(+) = L-glutamyl 5-phosphate + NADPH + H(+). It functions in the pathway amino-acid biosynthesis; L-proline biosynthesis; L-glutamate 5-semialdehyde from L-glutamate: step 2/2. In terms of biological role, catalyzes the NADPH-dependent reduction of L-glutamate 5-phosphate into L-glutamate 5-semialdehyde and phosphate. The product spontaneously undergoes cyclization to form 1-pyrroline-5-carboxylate. In Bacillus cereus (strain B4264), this protein is Gamma-glutamyl phosphate reductase.